Consider the following 161-residue polypeptide: S-ribosylhomocysteine lyase (161 aa).

Residues histidine 57, histidine 61, and cysteine 127 each coordinate Fe cation.

Belongs to the LuxS family. Homodimer. Fe cation is required as a cofactor.

The catalysed reaction is S-(5-deoxy-D-ribos-5-yl)-L-homocysteine = (S)-4,5-dihydroxypentane-2,3-dione + L-homocysteine. Involved in the synthesis of autoinducer 2 (AI-2) which is secreted by bacteria and is used to communicate both the cell density and the metabolic potential of the environment. The regulation of gene expression in response to changes in cell density is called quorum sensing. Catalyzes the transformation of S-ribosylhomocysteine (RHC) to homocysteine (HC) and 4,5-dihydroxy-2,3-pentadione (DPD). The protein is S-ribosylhomocysteine lyase of Streptococcus equi subsp. zooepidemicus (strain H70).